The chain runs to 115 residues: U3-lycotoxin-Ls1k (115 aa).

Positions 1–20 (MKFVLLFGVLLVALFSYSSA) are cleaved as a signal peptide. The propeptide occupies 21-44 (EMLDDFGQADEDELLSLIEKEEAR). 4 disulfides stabilise this stretch: cysteine 48/cysteine 63, cysteine 55/cysteine 72, cysteine 62/cysteine 87, and cysteine 74/cysteine 85.

The protein belongs to the neurotoxin 19 (CSTX) family. 01 subfamily. Expressed by the venom gland.

The protein localises to the secreted. The chain is U3-lycotoxin-Ls1k from Lycosa singoriensis (Wolf spider).